A 351-amino-acid chain; its full sequence is Methylthioribose-1-phosphate isomerase (351 aa).

Substrate-binding positions include arginine 51–alanine 53, arginine 94, and glutamine 199. Aspartate 240 serves as the catalytic Proton donor. Asparagine 250–lysine 251 is a binding site for substrate.

Belongs to the EIF-2B alpha/beta/delta subunits family. MtnA subfamily. In terms of assembly, homodimer.

It catalyses the reaction 5-(methylsulfanyl)-alpha-D-ribose 1-phosphate = 5-(methylsulfanyl)-D-ribulose 1-phosphate. Its pathway is amino-acid biosynthesis; L-methionine biosynthesis via salvage pathway; L-methionine from S-methyl-5-thio-alpha-D-ribose 1-phosphate: step 1/6. Its function is as follows. Catalyzes the interconversion of methylthioribose-1-phosphate (MTR-1-P) into methylthioribulose-1-phosphate (MTRu-1-P). The polypeptide is Methylthioribose-1-phosphate isomerase (Bacillus thuringiensis (strain Al Hakam)).